Consider the following 119-residue polypeptide: uncharacterized protein (119 aa).

3 helical membrane-spanning segments follow: residues 28–48 (AWTT…HLVF), 55–75 (IEVV…NLAI), and 80–100 (PIGK…GIIV).

To M.tuberculosis Rv1342c.

The protein localises to the cell membrane. This is an uncharacterized protein from Mycobacterium leprae (strain TN).